Here is a 109-residue protein sequence, read N- to C-terminus: Anti-sigma-B factor antagonist (109 aa).

The region spanning 3–109 (INVDVKQNEN…ISAKSEGGVQ (107 aa)) is the STAS domain. Phosphoserine is present on residues Ser-52 and Ser-56. At Thr-57 the chain carries Phosphothreonine.

This sequence belongs to the anti-sigma-factor antagonist family. In terms of assembly, monomer. In stressed cells, forms a complex with RsbW. The predominant form of this complex has a stoichiometry of 2:2 (one dimer of RsbW is bound by two monomers of RsbV). Binds to RsbW in the presence of low levels of ATP or under conditions of energy or environmental stress (through dephosphorylation by RsbP or RsbU). Post-translationally, phosphorylated by RsbW on a serine residue. Dephosphorylated by RsbP or RsbU.

Its function is as follows. Positive regulator of sigma-B activity. Non-phosphorylated RsbV binds to RsbW, preventing its association with sigma-B. When phosphorylated, releases RsbW, which is then free to complex with and inactivate sigma-B. The polypeptide is Anti-sigma-B factor antagonist (rsbV) (Bacillus subtilis (strain 168)).